A 312-amino-acid chain; its full sequence is MASIRQAFVKSLRFYDIGYNATDPVFRGIYHEKLKHPDDFDSIISRAKAVGVEKMMITGDNVENSEEALNLATNYECFTSTVGVHPCQAQCFLRHSEGPEDYLVKLEALANKGKASGKVVAFGEFGLDYDRLHYAPADVQKMYFEEQLKVAVRVQLPLFLHSRNAENDFFAILEKYLPELPKKGVVHSFTGSIDEMRRCIEHGLYVGVNGCSLKTEENLEVVRAIPLEKMLLETDAPWCEVRPSHAGHQFLKTKLPFDSCKKERFKEGCMIRGRNEPCNTYIVAEIVAALKDISLEELSEQIWENSINLLSK.

Residues Glu-124, His-161, His-187, and Asp-235 each contribute to the a divalent metal cation site.

The protein belongs to the metallo-dependent hydrolases superfamily. TatD-type hydrolase family. A divalent metal cation serves as cofactor.

It is found in the cytoplasm. Its subcellular location is the nucleus. Its function is as follows. Has both endo- and exonuclease activities. Incises double-stranded DNA without obvious specificity via its endonuclease activity and excises the DNA from the 3'-to 5'-end by its exonuclease activity. May have a role in apoptosis. This Schizosaccharomyces pombe (strain 972 / ATCC 24843) (Fission yeast) protein is Deoxyribonuclease Tat-D.